The chain runs to 100 residues: UPF0213 protein YhbQ (100 aa).

The 76-residue stretch at 2-77 folds into the GIY-YIG domain; it reads TPWFLYLIRT…KQLTKRQKER (76 aa).

The protein belongs to the UPF0213 family.

The protein is UPF0213 protein YhbQ of Escherichia coli O139:H28 (strain E24377A / ETEC).